Here is a 470-residue protein sequence, read N- to C-terminus: MKNFLCEDFLLSNETARRLYHEHACHQPIYDYHCHLNPAEVAQNRQFDNLGQIWLEGDHYKWRGMRSAGIEERLITGDASDYDKYMAWAKTVPQTLGNPLYHWTHLELRRPFGITNTLFSPDTADQIWHQCNELLATPEFTARGIMQQMNVVMAGTTDDPIDSLKHHKTIAEDDTFNVKVLPSWRPDKAFKIELDLFADYMHKLGEVADIEIRRFDDLLSALDKRLAHFDAHGCRAADHGIEIVRYAPIPSEADLDVLLARRLNGEVLSELECAQFSTAVQVWLGKRYAQLGWVMQLHIGAQRNNSTRMFQLLGADAGFDSIGDRPFAFELAHLLDEMDQTNELPRTILYCLNPRDNEMMATMIGNFQGGGIAGKVQFGSGWWFNDQKDGMQRQMEQLSQLGLLSQFVGMLTDSRSFLSYTRHEYFRRILCDMVGRWAENGEVPNDLSLLGPMVEDICFGNAKRYFEERV.

The protein belongs to the metallo-dependent hydrolases superfamily. Uronate isomerase family.

The catalysed reaction is D-glucuronate = D-fructuronate. It catalyses the reaction aldehydo-D-galacturonate = keto-D-tagaturonate. The protein operates within carbohydrate metabolism; pentose and glucuronate interconversion. The polypeptide is Uronate isomerase (Vibrio vulnificus (strain CMCP6)).